The primary structure comprises 215 residues: Large ribosomal subunit protein uL3 (215 aa).

Gln-151 carries the N5-methylglutamine modification.

The protein belongs to the universal ribosomal protein uL3 family. In terms of assembly, part of the 50S ribosomal subunit. Forms a cluster with proteins L14 and L19. In terms of processing, methylated by PrmB.

Its function is as follows. One of the primary rRNA binding proteins, it binds directly near the 3'-end of the 23S rRNA, where it nucleates assembly of the 50S subunit. The polypeptide is Large ribosomal subunit protein uL3 (Rickettsia bellii (strain OSU 85-389)).